We begin with the raw amino-acid sequence, 701 residues long: Elongation factor G (701 aa).

In terms of domain architecture, tr-type G spans 8 to 290 (SLYRNIGISA…AVIDYLPAPT (283 aa)). GTP-binding positions include 17 to 24 (AHIDAGKT), 88 to 92 (DTPGH), and 142 to 145 (NKMD).

It belongs to the TRAFAC class translation factor GTPase superfamily. Classic translation factor GTPase family. EF-G/EF-2 subfamily.

The protein resides in the cytoplasm. Its function is as follows. Catalyzes the GTP-dependent ribosomal translocation step during translation elongation. During this step, the ribosome changes from the pre-translocational (PRE) to the post-translocational (POST) state as the newly formed A-site-bound peptidyl-tRNA and P-site-bound deacylated tRNA move to the P and E sites, respectively. Catalyzes the coordinated movement of the two tRNA molecules, the mRNA and conformational changes in the ribosome. The sequence is that of Elongation factor G from Haemophilus ducreyi (strain 35000HP / ATCC 700724).